The following is a 133-amino-acid chain: Ribosome-binding factor A (133 aa).

The protein belongs to the RbfA family. In terms of assembly, monomer. Binds 30S ribosomal subunits, but not 50S ribosomal subunits or 70S ribosomes.

It localises to the cytoplasm. Functionally, one of several proteins that assist in the late maturation steps of the functional core of the 30S ribosomal subunit. Associates with free 30S ribosomal subunits (but not with 30S subunits that are part of 70S ribosomes or polysomes). Required for efficient processing of 16S rRNA. May interact with the 5'-terminal helix region of 16S rRNA. This is Ribosome-binding factor A from Chlamydia muridarum (strain MoPn / Nigg).